The chain runs to 319 residues: R-phycoerythrin gamma chain, chloroplastic (319 aa).

The transit peptide at 1-71 (MDSPAFAVTG…RPKKLASYKR (71 aa)) directs the protein to the chloroplast. Residues C96 and C135 each contribute to the phycourobilin site. C212 serves as a coordination point for (2R,3E)-phycoerythrobilin. C299 contacts phycourobilin.

Heteromer of 4 alpha, 4 beta and one gamma chains. Post-translationally, contains four covalently linked bilin chromophores.

It is found in the plastid. The protein localises to the chloroplast thylakoid membrane. The polypeptide is R-phycoerythrin gamma chain, chloroplastic (Corallina officinalis (Coral seaweed)).